The primary structure comprises 683 residues: Transcription factor SFP1 (683 aa).

6 disordered regions span residues 156 to 178 (ATNT…PYHR), 305 to 324 (DSNS…NIIQ), 332 to 357 (VNHT…TANP), 399 to 420 (SNSP…NSGI), 498 to 517 (HNSM…YNTF), and 535 to 573 (IDDI…NNYK). Polar residues predominate over residues 160-173 (LQIQQPTKRPSVSN). The segment at 230-458 (NTTNMSQIPM…NYSLNKTSRN (229 aa)) is prion domain (PrD). Positions 535–557 (IDDIDDDDDVDDDDDDDDDDDTE) are enriched in acidic residues. Residues 558 to 573 (NGSSSNGKSVHNNNYK) show a composition bias toward polar residues. 2 C2H2-type zinc fingers span residues 598 to 623 (FKCP…LHGH) and 659 to 683 (YRCE…HSTH).

As to quaternary structure, interacts with the target of rapamycin complex 1 (TORC1) in a rapamycin-dependent manner. Interacts with MRS6. Phosphorylated by TORC1 kinase at multiple sites. Phosphorylation regulates nuclear localization and RP promoter binding.

It localises to the cytoplasm. Its subcellular location is the nucleus. Its function is as follows. Transcription factor that regulates ribosomal protein (RP) and ribosome biogenesis (Ribi) gene expression in response to nutrients and stress. Promotes RP gene expression under optimal growth conditions. Leaves the nucleus upon environmental challenges, resulting in a down-regulation of RP gene transcription. The effect of the environmental cues on SFP1 localization is mediated through the TOR pathway. Also regulates the expression of genes involved in the G2/M transition during the mitotic cell cycle and the DNA-damage response. Required for carbon-source modulation of cell size. The protein is Transcription factor SFP1 (SFP1) of Saccharomyces cerevisiae (strain ATCC 204508 / S288c) (Baker's yeast).